Here is a 1113-residue protein sequence, read N- to C-terminus: Translation initiation factor IF-2 (1113 aa).

4 stretches are compositionally biased toward polar residues: residues 56 to 72, 129 to 139, 162 to 187, and 194 to 205; these read QSNQ…SSKE, KANTSNQSKGV, LENN…TQLV, and TKNNEPPQQKTS. Disordered regions lie at residues 56–446 and 470–504; these read QSNQ…IGEN and LARP…RQRR. Positions 248-265 are enriched in low complexity; sequence PVQPRTQNNQNRQRIPNK. Residues 415–429 show a composition bias toward basic and acidic residues; it reads RRSDWDDAAKLEALR. 2 stretches are compositionally biased toward basic residues: residues 474 to 483 and 490 to 504; these read AKPKSTKKSN and TRKR…RQRR. The 173-residue stretch at 605-777 folds into the tr-type G domain; it reads RRPPVVTVMG…VLLVTEVEDL (173 aa). Positions 614–621 are G1; that stretch reads GHVDHGKT. 614–621 lines the GTP pocket; that stretch reads GHVDHGKT. The G2 stretch occupies residues 639–643; sequence GITQH. The G3 stretch occupies residues 664 to 667; the sequence is DTPG. Residues 664 to 668 and 718 to 721 each bind GTP; these read DTPGH and NKID. The interval 718–721 is G4; the sequence is NKID. Positions 754 to 756 are G5; that stretch reads SAI.

This sequence belongs to the TRAFAC class translation factor GTPase superfamily. Classic translation factor GTPase family. IF-2 subfamily.

The protein localises to the cytoplasm. One of the essential components for the initiation of protein synthesis. Protects formylmethionyl-tRNA from spontaneous hydrolysis and promotes its binding to the 30S ribosomal subunits. Also involved in the hydrolysis of GTP during the formation of the 70S ribosomal complex. The protein is Translation initiation factor IF-2 of Prochlorococcus marinus (strain MIT 9211).